The following is a 353-amino-acid chain: Thrombopoietin (353 aa).

Residues 1–21 (MELTELLLVVMLLLTARLTLS) form the signal peptide. Ser-22 carries an O-linked (GalNAc...) serine glycan. Intrachain disulfides connect Cys-28–Cys-172 and Cys-50–Cys-106. Thr-58, Thr-131, Thr-179, and Thr-180 each carry an O-linked (GalNAc...) threonine glycan. Residue Ser-184 is glycosylated (O-linked (GalNAc...) serine). N-linked (GlcNAc...) (complex) asparagine glycans are attached at residues Asn-197 and Asn-206. A glycan (O-linked (GalNAc...) threonine) is linked at Thr-213. N-linked (GlcNAc...) (complex) asparagine glycans are attached at residues Asn-234 and Asn-255. Positions 257–353 (TRGLFPGPSR…THSQNLSQEG (97 aa)) are disordered. An O-linked (GalNAc...) serine glycan is attached at Ser-265. Positions 275-304 (SSGTSDTGSLPPNLQPGYSPSPTHPPTGQY) are enriched in polar residues. The span at 324-335 (LPDPSAPTPTPT) shows a compositional bias: pro residues. 2 N-linked (GlcNAc...) asparagine glycosylation sites follow: Asn-340 and Asn-348. The segment covering 343–353 (YTHSQNLSQEG) has biased composition (polar residues).

It belongs to the EPO/TPO family. As to quaternary structure, interacts with MPL/TPOR.

The protein resides in the secreted. Its function is as follows. Lineage-specific cytokine affecting the proliferation and maturation of megakaryocytes from their committed progenitor cells. It acts at a late stage of megakaryocyte development. It may be the major physiological regulator of circulating platelets. This Homo sapiens (Human) protein is Thrombopoietin (THPO).